Here is an 80-residue protein sequence, read N- to C-terminus: Growth factor (80 aa).

A signal peptide spans 1-19 (MATRNLVASLLCIMYAVHA). Residues 29–73 (HVKVCNHDYENYCLNNGTCFTIALDNVSITPFCVCRINYEGSRCQ) form the EGF-like domain. Intrachain disulfides connect Cys-33–Cys-47, Cys-41–Cys-61, and Cys-63–Cys-72. N-linked (GlcNAc...) asparagine; by host glycosylation is found at Asn-44 and Asn-54.

Its subcellular location is the secreted. The polypeptide is Growth factor (Oryctolagus cuniculus (Rabbit)).